We begin with the raw amino-acid sequence, 262 residues long: Flap endonuclease Xni (262 aa).

Aspartate 105 is a binding site for Mg(2+). Positions 162–257 (ERSQFLDLMA…FRVIDSPPEK (96 aa)) constitute a 5'-3' exonuclease domain. 5 residues coordinate K(+): leucine 172, alanine 173, proline 181, isoleucine 183, and isoleucine 186. The segment at 185-190 (GIGPKS) is interaction with DNA.

This sequence belongs to the Xni family. The cofactor is Mg(2+). K(+) is required as a cofactor.

Has flap endonuclease activity. During DNA replication, flap endonucleases cleave the 5'-overhanging flap structure that is generated by displacement synthesis when DNA polymerase encounters the 5'-end of a downstream Okazaki fragment. This is Flap endonuclease Xni from Shewanella baltica (strain OS223).